Here is a 664-residue protein sequence, read N- to C-terminus: Cyclic nucleotide-gated channel alpha-2 (664 aa).

A compositionally biased stretch (polar residues) spans 1–10 (MMTEKSNGVK). Positions 1–61 (MMTEKSNGVK…LQRLAEMDTP (61 aa)) are disordered. Topologically, residues 1–146 (MMTEKSNGVK…PAGDWYYRWL (146 aa)) are cytoplasmic. The chain crosses the membrane as a helical span at residues 147–168 (FVIAMPVLYNWCLLVARACFSD). Topologically, residues 169-178 (LQRNYFVVWL) are extracellular. A helical membrane pass occupies residues 179–199 (VLDYFSDTVYIADLIIRLRTG). Residues 200-224 (FLEQGLLVKDPKKLRDNYIHTLQFK) are Cytoplasmic-facing. The helical transmembrane segment at 225–243 (LDVASIIPTDLIYFAVGIH) threads the bilayer. Residues 244 to 248 (SPEVR) lie on the Extracellular side of the membrane. A helical transmembrane segment spans residues 249 to 267 (FNRLLHFARMFEFFDRTET). Residues 268-274 (RTSYPNI) lie on the Cytoplasmic side of the membrane. The interval 272–380 (PNIFRISNLV…GNVGSMISNM (109 aa)) is ion conduction pathway. A helical membrane pass occupies residues 275–298 (FRISNLVLYILVIIHWNACIYYAI). Residues 299-321 (SKSIGFGVDTWVYPNITDPEYGY) are Extracellular-facing. Helical transmembrane passes span 322–356 (LAREYIYCLYWSTLTLTTIGETPPPVKDEEYLFVI) and 357–381 (FDFLIGVLIFATIVGNVGSMISNMN). The tract at residues 339-342 (TIGE) is selectivity filter. The C-linker stretch occupies residues 382–458 (ATRAEFQAKI…STLKKVRIFQ (77 aa)). At 382–664 (ATRAEFQAKI…INTPEPAVAE (283 aa)) the chain is on the cytoplasmic side. The segment at 462-582 (AGLLVELVLK…EERGREILMK (121 aa)) is cyclic nucleotide-binding domain. Positions 522, 525, 538, and 539 each coordinate 3',5'-cyclic GMP. Arg538 and Thr539 together coordinate 3',5'-cyclic AMP. Residues 599–653 (VQEKLEQLETNMETLYTRFARLLAEYTGAQQKLKQRITVLETKMKQNHEDDYLSD) adopt a coiled-coil conformation.

This sequence belongs to the cyclic nucleotide-gated cation channel (TC 1.A.1.5) family. CNGA2 subfamily. As to quaternary structure, the olfactory cyclic nucleotide-gated channel is an heterotetramer composed of CNGA2, CNGA4 and CNGB1b subunits with 2:1:1 stoichiometry.

It localises to the cell projection. It is found in the cilium membrane. The enzyme catalyses Ca(2+)(in) = Ca(2+)(out). It carries out the reaction Na(+)(in) = Na(+)(out). It catalyses the reaction K(+)(in) = K(+)(out). The catalysed reaction is NH4(+)(in) = NH4(+)(out). The enzyme catalyses Rb(+)(in) = Rb(+)(out). It carries out the reaction Li(+)(in) = Li(+)(out). It catalyses the reaction Cs(+)(in) = Cs(+)(out). Pore-forming subunit of the olfactory cyclic nucleotide-gated channel. Operates in the cilia of olfactory sensory neurons where chemical stimulation of the odorant is converted to an electrical signal. Mediates odorant-induced cAMP-dependent Ca(2+) influx triggering neuron depolarization. The rise of intracellular Ca(2+) levels potentiates the olfactory response by activating Ca(2+)-dependent Cl(-) channels, but it also serves as a negative feedback signal to desensitize the channel for rapid adaptation to odorants. Conducts cAMP- and cGMP-gated ion currents, with permeability for monovalent and divalent cations. In Mus musculus (Mouse), this protein is Cyclic nucleotide-gated channel alpha-2.